The following is a 342-amino-acid chain: N-acetyl-gamma-glutamyl-phosphate reductase (342 aa).

Cys146 is an active-site residue.

Belongs to the NAGSA dehydrogenase family. Type 1 subfamily.

Its subcellular location is the cytoplasm. It catalyses the reaction N-acetyl-L-glutamate 5-semialdehyde + phosphate + NADP(+) = N-acetyl-L-glutamyl 5-phosphate + NADPH + H(+). The protein operates within amino-acid biosynthesis; L-arginine biosynthesis; N(2)-acetyl-L-ornithine from L-glutamate: step 3/4. Functionally, catalyzes the NADPH-dependent reduction of N-acetyl-5-glutamyl phosphate to yield N-acetyl-L-glutamate 5-semialdehyde. The chain is N-acetyl-gamma-glutamyl-phosphate reductase from Streptomyces coelicolor (strain ATCC BAA-471 / A3(2) / M145).